Consider the following 213-residue polypeptide: Probable thiopurine S-methyltransferase (213 aa).

S-adenosyl-L-methionine contacts are provided by tryptophan 10, leucine 45, glutamate 66, and arginine 125.

Belongs to the class I-like SAM-binding methyltransferase superfamily. TPMT family.

It localises to the cytoplasm. The catalysed reaction is S-adenosyl-L-methionine + a thiopurine = S-adenosyl-L-homocysteine + a thiopurine S-methylether.. The sequence is that of Probable thiopurine S-methyltransferase from Yarrowia lipolytica (strain CLIB 122 / E 150) (Yeast).